The sequence spans 643 residues: Protein tramtrack, beta isoform (643 aa).

The 66-residue stretch at 33–98 (TDVTLAVEGQ…MYRGEVSVDQ (66 aa)) folds into the BTB domain. Disordered regions lie at residues 118 to 148 (EVND…PQLQ) and 171 to 300 (ANAG…GLDT). Residue lysine 123 forms a Glycyl lysine isopeptide (Lys-Gly) (interchain with G-Cter in ubiquitin) linkage. Positions 125–145 (SPAAAAAGAGATGSESTATTP) are enriched in low complexity. The segment covering 176–187 (TPTLPVQPSLLS) has biased composition (polar residues). The segment covering 192-201 (PKRKRGRPRK) has biased composition (basic residues). Lysine 201 is covalently cross-linked (Glycyl lysine isopeptide (Lys-Gly) (interchain with G-Cter in ubiquitin)). Positions 254 to 285 (HTDDLNESRDSLPSKRSKNSKDHRVVSHHEDN) are enriched in basic and acidic residues. Residues lysine 355, lysine 397, lysine 418, lysine 457, lysine 478, and lysine 480 each participate in a glycyl lysine isopeptide (Lys-Gly) (interchain with G-Cter in ubiquitin) cross-link. 2 C2H2-type zinc fingers span residues 508 to 531 (YRCK…VTSH) and 538 to 561 (YPCP…KIIH). Lysine 545 participates in a covalent cross-link: Glycyl lysine isopeptide (Lys-Gly) (interchain with G-Cter in ubiquitin). Residues 584 to 643 (GVSGASTPPPPDLSGQNSNQSLPATSNALSTSSSSSTSSSSGSLGPLTTSAPPAPAAAAQ) are disordered. A compositionally biased stretch (low complexity) spans 604-643 (SLPATSNALSTSSSSSTSSSSGSLGPLTTSAPPAPAAAAQ).

In terms of assembly, can form homodimers. Interacts with Trl in vivo via the BTB domain. Interacts with phyl. Interacts with Usp47. Polyubiquitinated by sina. Polyubiquitin linkage is mainly through 'Lys-48', but linkage through 'Lys-63' also occurs. Deubiquitination by Usp47 leads to its stabilization.

Its subcellular location is the nucleus. Its function is as follows. Binds to a number of sites in the transcriptional regulatory region of ftz. Isoform beta is required to repress inappropriate segmentation gene transcription and repress genes incompatible with development of photoreceptor cell fates. Probable repressor of the transcription of the segmentation genes ftz, eve, h, odd, run, and en. Inhibits Trl-dependent activation of eve. May bind to the region AGGGC/TGG. Degradation of ttk is directed by binding of sinah or sina, via the adapter molecule phyl which binds to the BTB domain of ttk. A second method of degradation exists that is phyl-independent, this is mediated by recognition of motifs in the C-terminus of ttk. The chain is Protein tramtrack, beta isoform (ttk) from Drosophila melanogaster (Fruit fly).